The chain runs to 168 residues: 2-C-methyl-D-erythritol 2,4-cyclodiphosphate synthase (168 aa).

Residues aspartate 15 and histidine 17 each contribute to the a divalent metal cation site. 4-CDP-2-C-methyl-D-erythritol 2-phosphate contacts are provided by residues 15–17 (DVH) and 45–46 (HS). Histidine 53 is an a divalent metal cation binding site. 4-CDP-2-C-methyl-D-erythritol 2-phosphate is bound by residues 72-76 (FPNSD), phenylalanine 150, and arginine 153.

It belongs to the IspF family. As to quaternary structure, homotrimer. It depends on a divalent metal cation as a cofactor.

The catalysed reaction is 4-CDP-2-C-methyl-D-erythritol 2-phosphate = 2-C-methyl-D-erythritol 2,4-cyclic diphosphate + CMP. Its pathway is isoprenoid biosynthesis; isopentenyl diphosphate biosynthesis via DXP pathway; isopentenyl diphosphate from 1-deoxy-D-xylulose 5-phosphate: step 4/6. In terms of biological role, involved in the biosynthesis of isopentenyl diphosphate (IPP) and dimethylallyl diphosphate (DMAPP), two major building blocks of isoprenoid compounds. Catalyzes the conversion of 4-diphosphocytidyl-2-C-methyl-D-erythritol 2-phosphate (CDP-ME2P) to 2-C-methyl-D-erythritol 2,4-cyclodiphosphate (ME-CPP) with a corresponding release of cytidine 5-monophosphate (CMP). The chain is 2-C-methyl-D-erythritol 2,4-cyclodiphosphate synthase from Anaplasma phagocytophilum (strain HZ).